The following is a 356-amino-acid chain: DNA polymerase IV (356 aa).

One can recognise a UmuC domain in the interval 7–188; it reads IIHIDMDAFY…IPVTKFYGVG (182 aa). Positions 11 and 106 each coordinate Mg(2+). Glu107 is an active-site residue.

Belongs to the DNA polymerase type-Y family. Monomer. Requires Mg(2+) as cofactor.

Its subcellular location is the cytoplasm. The catalysed reaction is DNA(n) + a 2'-deoxyribonucleoside 5'-triphosphate = DNA(n+1) + diphosphate. Poorly processive, error-prone DNA polymerase involved in untargeted mutagenesis. Copies undamaged DNA at stalled replication forks, which arise in vivo from mismatched or misaligned primer ends. These misaligned primers can be extended by PolIV. Exhibits no 3'-5' exonuclease (proofreading) activity. May be involved in translesional synthesis, in conjunction with the beta clamp from PolIII. This is DNA polymerase IV from Listeria welshimeri serovar 6b (strain ATCC 35897 / DSM 20650 / CCUG 15529 / CIP 8149 / NCTC 11857 / SLCC 5334 / V8).